The chain runs to 171 residues: Nicotinamide-nucleotide adenylyltransferase (171 aa).

This sequence belongs to the archaeal NMN adenylyltransferase family.

It is found in the cytoplasm. The enzyme catalyses beta-nicotinamide D-ribonucleotide + ATP + H(+) = diphosphate + NAD(+). It functions in the pathway cofactor biosynthesis; NAD(+) biosynthesis; NAD(+) from nicotinamide D-ribonucleotide: step 1/1. This Methanococcus maripaludis (strain C5 / ATCC BAA-1333) protein is Nicotinamide-nucleotide adenylyltransferase.